A 325-amino-acid chain; its full sequence is Melanocortin receptor 5 (325 aa).

Over 1–37 (MNSSFHLHFLDLNLNATEGNLSGPNVKNKSSPCEDMG) the chain is Extracellular. N-linked (GlcNAc...) asparagine glycosylation is found at Asn-2, Asn-15, Asn-20, and Asn-28. Residues 38–61 (IAVEVFLTLGVISLLENILVIGAI) form a helical membrane-spanning segment. Residues 62 to 73 (VKNKNLHSPMYF) lie on the Cytoplasmic side of the membrane. Residues 74 to 97 (FVCSLAVADMLVSMSSAWETITIY) traverse the membrane as a helical segment. Topologically, residues 98 to 114 (LLNNKHLVIADAFVRHI) are extracellular. Residues 115–138 (DNVFDSMICISVVASMCSLLAIAV) traverse the membrane as a helical segment. The Cytoplasmic portion of the chain corresponds to 139 to 155 (DRYVTIFYALRYHHIMT). Residues 156-179 (ARRSGAIIAGIWAFCTGCGIVFIL) traverse the membrane as a helical segment. Residues 180-186 (YSESTYV) are Extracellular-facing. Residues 187 to 211 (ILCLISMFFAMLFLLVSLYIHMFLL) traverse the membrane as a helical segment. At 212-239 (ARTHVKRIAALPGASSARQRTSMQGAVT) the chain is on the cytoplasmic side. The helical transmembrane segment at 240–265 (VTMLLGVFTVCWAPFFLHLTLMLSCP) threads the bilayer. Over 266 to 273 (QNLYCSRF) the chain is Extracellular. A helical transmembrane segment spans residues 274-297 (MSHFNMYLILIMCNSVMDPLIYAF). The Cytoplasmic portion of the chain corresponds to 298–325 (RSQEMRKTFKEIICCRGFRIACSFPRRD). S-palmitoyl cysteine attachment occurs at residues Cys-311 and Cys-312.

This sequence belongs to the G-protein coupled receptor 1 family. As to expression, expressed in the brain but not in the melanoma cells.

It is found in the cell membrane. Its function is as follows. Receptor for MSH (alpha, beta and gamma) and ACTH. The activity of this receptor is mediated by G proteins which activate adenylate cyclase. This receptor is a possible mediator of the immunomodulation properties of melanocortins. This Homo sapiens (Human) protein is Melanocortin receptor 5 (MC5R).